A 199-amino-acid chain; its full sequence is Segregation and condensation protein B (199 aa).

Belongs to the ScpB family. As to quaternary structure, homodimer. Homodimerization may be required to stabilize the binding of ScpA to the Smc head domains. Component of a cohesin-like complex composed of ScpA, ScpB and the Smc homodimer, in which ScpA and ScpB bind to the head domain of Smc. The presence of the three proteins is required for the association of the complex with DNA.

It is found in the cytoplasm. Participates in chromosomal partition during cell division. May act via the formation of a condensin-like complex containing Smc and ScpA that pull DNA away from mid-cell into both cell halves. In Leuconostoc mesenteroides subsp. mesenteroides (strain ATCC 8293 / DSM 20343 / BCRC 11652 / CCM 1803 / JCM 6124 / NCDO 523 / NBRC 100496 / NCIMB 8023 / NCTC 12954 / NRRL B-1118 / 37Y), this protein is Segregation and condensation protein B.